The chain runs to 118 residues: Ribonuclease P protein component (118 aa).

This sequence belongs to the RnpA family. In terms of assembly, consists of a catalytic RNA component (M1 or rnpB) and a protein subunit.

It carries out the reaction Endonucleolytic cleavage of RNA, removing 5'-extranucleotides from tRNA precursor.. RNaseP catalyzes the removal of the 5'-leader sequence from pre-tRNA to produce the mature 5'-terminus. It can also cleave other RNA substrates such as 4.5S RNA. The protein component plays an auxiliary but essential role in vivo by binding to the 5'-leader sequence and broadening the substrate specificity of the ribozyme. This chain is Ribonuclease P protein component, found in Mycobacterium sp. (strain KMS).